Here is a 318-residue protein sequence, read N- to C-terminus: MKQLMMSDVTPEEIFNQRRQIIKSMGLGIATLGLPNIAFAEENVSELKALTFKAASKSDLALTPENKIIGYNNFYEFGTDKAAPAKFAKDFKTDPWQLEISGEVENPFVLNHQQLFNTFPLEERIYRFRCVEAWSMVVPWIGFELARLVEMAKPSSKAKYVVFHTLYDPEQMPGQKNPLFGGSIDYPYVEALTIEEAMNSLTLLSVGLYGKMLPPQNGAPIRLVMPWKYGFKSIKSIVKISFSETRPKTTWESLAPTEYGFYANVNPNVDHPRWSQGSERVIGAGGLLSVKRQPTLMFNGYEDQVAHLYKDLDLKVNF.

Residues 1 to 40 (MKQLMMSDVTPEEIFNQRRQIIKSMGLGIATLGLPNIAFA) constitute a signal peptide (tat-type signal). Mo-molybdopterin contacts are provided by residues Asn72, 75 to 76 (YE), Cys130, Thr165, Asn217, Arg222, and 233 to 235 (SIK).

The protein belongs to the MsrP family. In terms of assembly, heterodimer of a catalytic subunit (MsrP) and a heme-binding subunit (MsrQ). Mo-molybdopterin serves as cofactor. In terms of processing, predicted to be exported by the Tat system. The position of the signal peptide cleavage has not been experimentally proven.

It localises to the periplasm. The enzyme catalyses L-methionyl-[protein] + a quinone + H2O = L-methionyl-(S)-S-oxide-[protein] + a quinol. It catalyses the reaction L-methionyl-[protein] + a quinone + H2O = L-methionyl-(R)-S-oxide-[protein] + a quinol. In terms of biological role, part of the MsrPQ system that repairs oxidized periplasmic proteins containing methionine sulfoxide residues (Met-O), using respiratory chain electrons. Thus protects these proteins from oxidative-stress damage caused by reactive species of oxygen and chlorine generated by the host defense mechanisms. MsrPQ is essential for the maintenance of envelope integrity under bleach stress, rescuing a wide series of structurally unrelated periplasmic proteins from methionine oxidation. The catalytic subunit MsrP is non-stereospecific, being able to reduce both (R-) and (S-) diastereoisomers of methionine sulfoxide. The chain is Protein-methionine-sulfoxide reductase catalytic subunit MsrP from Haemophilus ducreyi (strain 35000HP / ATCC 700724).